The sequence spans 736 residues: 1,4-alpha-glucan branching enzyme GlgB 2 (736 aa).

Catalysis depends on Asp-415, which acts as the Nucleophile. Glu-468 (proton donor) is an active-site residue.

The protein belongs to the glycosyl hydrolase 13 family. GlgB subfamily. As to quaternary structure, monomer.

It carries out the reaction Transfers a segment of a (1-&gt;4)-alpha-D-glucan chain to a primary hydroxy group in a similar glucan chain.. The protein operates within glycan biosynthesis; glycogen biosynthesis. Its function is as follows. Catalyzes the formation of the alpha-1,6-glucosidic linkages in glycogen by scission of a 1,4-alpha-linked oligosaccharide from growing alpha-1,4-glucan chains and the subsequent attachment of the oligosaccharide to the alpha-1,6 position. The sequence is that of 1,4-alpha-glucan branching enzyme GlgB 2 from Rhizobium johnstonii (strain DSM 114642 / LMG 32736 / 3841) (Rhizobium leguminosarum bv. viciae).